Consider the following 21-residue polypeptide: Venom nerve growth factor Bco12 (21 aa).

Belongs to the NGF-beta family. As to quaternary structure, homodimer; non-covalently linked. Post-translationally, glycosylated. In terms of tissue distribution, expressed by the venom gland.

Its subcellular location is the secreted. Its function is as follows. Nerve growth factor is important for the development and maintenance of the sympathetic and sensory nervous systems. It stimulates division and differentiation of sympathetic and embryonic sensory neurons as well as basal forebrain cholinergic neurons in the brain. Its relevance in the snake venom is not clear. However, it has been shown to inhibit metalloproteinase-dependent proteolysis of platelet glycoprotein Ib alpha, suggesting a metalloproteinase inhibition to prevent metalloprotease autodigestion and/or protection against prey proteases. Binds a lipid between the two protein chains in the homodimer. The lipid-bound form promotes histamine relase from mouse mast cells, contrary to the lipid-free form. This is Venom nerve growth factor Bco12 from Bothrops cotiara (Cotiara).